The following is a 530-amino-acid chain: Chaperone Ric-8A (530 aa).

Ser435 bears the Phosphoserine mark. 2 positions are modified to phosphothreonine: Thr440 and Thr442. A phosphoserine mark is found at Ser501, Ser522, Ser523, and Ser527.

The protein belongs to the synembryn family. As to quaternary structure, interacts with GDP-bound G alpha proteins GNAI1, GNAO1 and GNAQ, and with GNA13 with lower affinity. Does not interact with G-alpha proteins when they are in complex with subunits beta and gamma. Interacts (via C-terminus) with RGS14; the interaction stimulates the dissociation of the complex between RGS14 and the active GTP-bound form of GNAI1. Interacts with NCS1; interaction is favored in the absence of Ca(2+) and myristoylation of NCS1 is not required. In terms of tissue distribution, expressed in neurons and neurites of the CA1 and CA2 subregions of the hippocampus (at protein level). In adult brain, it is expressed in the neocortex, hippocampus and cerebellum as well as in the pineal gland and ependymal layer.

It localises to the cytoplasm. The protein resides in the cell cortex. Functionally, chaperone that specifically binds and folds nascent G alpha proteins prior to G protein heterotrimer formation, promoting their stability and activity: folds GNAI1, GNAO1, GNA13 and GNAQ. Does not fold G(s) G-alpha proteins GNAS nor GNAL. Also acts as a guanine nucleotide exchange factor (GEF) for G alpha proteins by stimulating exchange of bound GDP for free GTP. Involved in regulation of microtubule pulling forces during mitotic movement of chromosomes by stimulating G(i)-alpha protein (GNAI1), possibly leading to release G(i)-alpha-GTP and NuMA proteins from the NuMA-GPSM2-G(i)-alpha-GDP complex. Also acts as an activator for G(q)-alpha (GNAQ) protein by enhancing the G(q)-coupled receptor-mediated ERK activation. The protein is Chaperone Ric-8A of Mus musculus (Mouse).